Reading from the N-terminus, the 235-residue chain is NAD-dependent protein deacylase (235 aa).

Positions 1–235 (MDLRLFKNIV…VPRFITQFLE (235 aa)) constitute a Deacetylase sirtuin-type domain. Residue 14-33 (GAGISAESGIRTFRDQDGLW) participates in NAD(+) binding. Substrate is bound by residues Tyr58 and Arg61. 95–98 (QNVD) is an NAD(+) binding site. The active-site Proton acceptor is the His113. Residues Cys121, Cys124, Cys140, and Cys143 each contribute to the Zn(2+) site. NAD(+)-binding positions include 180–182 (GTS), 204–206 (NLK), and Ala222.

The protein belongs to the sirtuin family. Class III subfamily. The cofactor is Zn(2+).

The protein resides in the cytoplasm. It catalyses the reaction N(6)-acetyl-L-lysyl-[protein] + NAD(+) + H2O = 2''-O-acetyl-ADP-D-ribose + nicotinamide + L-lysyl-[protein]. It carries out the reaction N(6)-succinyl-L-lysyl-[protein] + NAD(+) + H2O = 2''-O-succinyl-ADP-D-ribose + nicotinamide + L-lysyl-[protein]. In terms of biological role, NAD-dependent lysine deacetylase and desuccinylase that specifically removes acetyl and succinyl groups on target proteins. Modulates the activities of several proteins which are inactive in their acylated form. In Bdellovibrio bacteriovorus (strain ATCC 15356 / DSM 50701 / NCIMB 9529 / HD100), this protein is NAD-dependent protein deacylase.